The chain runs to 234 residues: N-(5'-phosphoribosyl)anthranilate isomerase (234 aa).

Positions 211 to 234 (RAASSSPRPVDGESPAFQRSEKAG) are disordered.

It belongs to the TrpF family.

It carries out the reaction N-(5-phospho-beta-D-ribosyl)anthranilate = 1-(2-carboxyphenylamino)-1-deoxy-D-ribulose 5-phosphate. Its pathway is amino-acid biosynthesis; L-tryptophan biosynthesis; L-tryptophan from chorismate: step 3/5. This Afipia carboxidovorans (strain ATCC 49405 / DSM 1227 / KCTC 32145 / OM5) (Oligotropha carboxidovorans) protein is N-(5'-phosphoribosyl)anthranilate isomerase.